Here is a 134-residue protein sequence, read N- to C-terminus: MRHYEIVFLVHPDQSEQVPQMIERYRGMIESDGGHFHRLEDWGRRQLAYPIKKAHKAHYVLMNIECSSVALAELEDAFRFNDAVLRHLILARDEAVTSPSFLARDETDRRERSEETAEGEGEPDHSANEAVVTA.

The segment at 100 to 134 (SFLARDETDRRERSEETAEGEGEPDHSANEAVVTA) is disordered. The span at 103-115 (ARDETDRRERSEE) shows a compositional bias: basic and acidic residues.

It belongs to the bacterial ribosomal protein bS6 family.

Its function is as follows. Binds together with bS18 to 16S ribosomal RNA. The sequence is that of Small ribosomal subunit protein bS6 from Acidithiobacillus ferrooxidans (strain ATCC 23270 / DSM 14882 / CIP 104768 / NCIMB 8455) (Ferrobacillus ferrooxidans (strain ATCC 23270)).